The following is a 239-amino-acid chain: uncharacterized protein (239 aa).

It localises to the endoplasmic reticulum. The protein localises to the golgi apparatus. This is an uncharacterized protein from Schizosaccharomyces pombe (strain 972 / ATCC 24843) (Fission yeast).